The primary structure comprises 162 residues: Ribosome maturation factor RimP (162 aa).

This sequence belongs to the RimP family.

The protein localises to the cytoplasm. Required for maturation of 30S ribosomal subunits. This is Ribosome maturation factor RimP from Ralstonia nicotianae (strain ATCC BAA-1114 / GMI1000) (Ralstonia solanacearum).